Consider the following 272-residue polypeptide: HMP-PP phosphatase (272 aa).

Residue aspartate 8 is the Nucleophile of the active site. Mg(2+)-binding residues include aspartate 8, aspartate 10, and aspartate 212.

This sequence belongs to the HAD-like hydrolase superfamily. Cof family. The cofactor is Mg(2+).

The catalysed reaction is 4-amino-2-methyl-5-(diphosphooxymethyl)pyrimidine + H2O = 4-amino-2-methyl-5-(phosphooxymethyl)pyrimidine + phosphate + H(+). Functionally, catalyzes the hydrolysis of 4-amino-2-methyl-5-hydroxymethylpyrimidine pyrophosphate (HMP-PP) to 4-amino-2-methyl-5-hydroxymethylpyrimidine phosphate (HMP-P). In Escherichia coli O8 (strain IAI1), this protein is HMP-PP phosphatase.